A 164-amino-acid chain; its full sequence is UPF0305 protein MTH_812 (164 aa).

It belongs to the UPF0305 family.

In Methanothermobacter thermautotrophicus (strain ATCC 29096 / DSM 1053 / JCM 10044 / NBRC 100330 / Delta H) (Methanobacterium thermoautotrophicum), this protein is UPF0305 protein MTH_812.